The following is a 157-amino-acid chain: Protein Smg homolog (157 aa).

The protein belongs to the Smg family.

The polypeptide is Protein Smg homolog (Photobacterium profundum (strain SS9)).